A 153-amino-acid chain; its full sequence is UPF0266 membrane protein SG1324 (153 aa).

3 helical membrane-spanning segments follow: residues 6–26 (IGLVIMIVIALLFAVFDEFIV), 46–66 (LDGLIFIVLLLILLYKNITTD), and 68–88 (KVMTSTLILFLGLMVIYLAYI).

Belongs to the UPF0266 family.

The protein resides in the cell inner membrane. The chain is UPF0266 membrane protein SG1324 from Sodalis glossinidius (strain morsitans).